A 161-amino-acid polypeptide reads, in one-letter code: Nucleotide-binding protein Ssed_3443 (161 aa).

The protein belongs to the YajQ family.

In terms of biological role, nucleotide-binding protein. This Shewanella sediminis (strain HAW-EB3) protein is Nucleotide-binding protein Ssed_3443.